Reading from the N-terminus, the 267-residue chain is Neutrophil elastase (267 aa).

A signal peptide spans 1-27 (MTLGRRLACLFLACVLPALLLGGTALA). Residues 28 to 29 (SE) constitute a propeptide that is removed on maturation. The Peptidase S1 domain occupies 30 to 247 (IVGGRRARPH…FVNWIDSIIQ (218 aa)). Cys55 and Cys71 are joined by a disulfide. The Charge relay system role is filled by His70. Asn88 is a glycosylation site (N-linked (GlcNAc...) asparagine). Catalysis depends on Asp117, which acts as the Charge relay system. 2 N-linked (GlcNAc...) asparagine glycosylation sites follow: Asn124 and Asn173. Disulfide bonds link Cys151/Cys208, Cys181/Cys187, and Cys198/Cys223. Residue Ser202 is the Charge relay system of the active site.

It belongs to the peptidase S1 family. Elastase subfamily. Interacts with NOTCH2NL. Interacts with agaphelin, an antihemostatic protein from Anopheles gambiae. Bone marrow cells. Neutrophil.

It is found in the cytoplasmic vesicle. Its subcellular location is the phagosome. It carries out the reaction Hydrolysis of proteins, including elastin. Preferential cleavage: Val-|-Xaa &gt; Ala-|-Xaa.. In terms of biological role, serine protease that modifies the functions of natural killer cells, monocytes and granulocytes. Inhibits C5a-dependent neutrophil enzyme release and chemotaxis. Promotes cleavage of GSDMB, thereby inhibiting pyroptosis. Promotes blood coagulation. Through the activation of the platelet fibrinogen receptor integrin alpha-IIb/beta-3, potentiates platelet aggregation induced by a threshold concentration of cathepsin G (CTSG). Cleaves and thus inactivates tissue factor pathway inhibitor (TFPI). Capable of killing E.coli but not S.aureus in vitro; digests outer membrane protein A (ompA) in E.coli and K.pneumoniae. This is Neutrophil elastase (ELANE) from Homo sapiens (Human).